Consider the following 96-residue polypeptide: RNA-binding protein Hfq (96 aa).

The region spanning 9-68 (DPYLNALRRERIPVSIYLVNGIKLQGQIESFDQFVILLKNTVNQMVYKHAISTVVPARSV) is the Sm domain.

This sequence belongs to the Hfq family. As to quaternary structure, homohexamer.

Functionally, RNA chaperone that binds small regulatory RNA (sRNAs) and mRNAs to facilitate mRNA translational regulation in response to envelope stress, environmental stress and changes in metabolite concentrations. Also binds with high specificity to tRNAs. The chain is RNA-binding protein Hfq from Histophilus somni (strain 129Pt) (Haemophilus somnus).